The primary structure comprises 595 residues: Estrogen receptor (595 aa).

The modulating(transactivation AF-1); mediates interaction with MACROD1 stretch occupies residues 1-184 (MTMTLHTKAS…AMESVKETRY (184 aa)). S10 is a glycosylation site (O-linked (GlcNAc) serine). Residues 35–47 (LERALSEVYVDSS) form a required for interaction with NCOA1 region. The segment at 35–174 (LERALSEVYV…LSSSSEKGSM (140 aa)) is interaction with DDX5; self-association. Phosphoserine; by CDK2 is present on residues S103 and S105. The residue at position 118 (S118) is a Phosphoserine. A disordered region spans residues 143–174 (DSGPPAFYRSNSDNRRQSGRERLSSSSEKGSM). Residues 154-165 (SDNRRQSGRERL) show a composition bias toward basic and acidic residues. S167 bears the Phosphoserine; by CK2 mark. 2 NR C4-type zinc fingers span residues 185–205 (CAVC…CEGC) and 221–245 (CPAT…LRKC). Positions 185 to 250 (CAVCNDYASG…RLRKCYEVGM (66 aa)) form a DNA-binding region, nuclear receptor. The mediates interaction with DNTTIP2 stretch occupies residues 185 to 310 (CAVCNDYASG…TKKNSPALSL (126 aa)). The tract at residues 251 to 310 (MKGGIRKDRRGGRMLKHKRQRDDLEGRNDMGPSGDMRATNLWPSPLVIKHTKKNSPALSL) is hinge. An Asymmetric dimethylarginine; by PRMT1 modification is found at R260. Residues 260–269 (RGGRMLKHKR) are compositionally biased toward basic residues. The segment at 260–285 (RGGRMLKHKRQRDDLEGRNDMGPSGD) is disordered. The interaction with AKAP13 stretch occupies residues 262-595 (GRMLKHKRQR…SEAESFPNTI (334 aa)). Residues 264-595 (MLKHKRQRDD…SEAESFPNTI (332 aa)) form a self-association region. The NR LBD domain occupies 311-547 (TADQMVSALL…DLLLEMLDAH (237 aa)). The transactivation AF-2 stretch occupies residues 311–595 (TADQMVSALL…SEAESFPNTI (285 aa)). Residues E353 and R394 each coordinate 17beta-estradiol. A lipid anchor (S-palmitoyl cysteine) is attached at C447. Position 524 (H524) interacts with 17beta-estradiol. Y537 bears the Phosphotyrosine; by Tyr-kinases mark. Residues 554 to 578 (SRMGVSPEEPSQSQLTTTNSTSSHS) form a disordered region. The segment covering 564 to 578 (SQSQLTTTNSTSSHS) has biased composition (low complexity). T571 carries O-linked (GlcNAc) threonine glycosylation.

The protein belongs to the nuclear hormone receptor family. NR3 subfamily. As to quaternary structure, binds DNA as a homodimer. Can form a heterodimer with ESR2. Interacts with coactivator NCOA5. Interacts with PELP1, the interaction is enhanced by 17-beta-estradiol; the interaction increases ESR1 transcriptional activity. Interacts with NCOA7; the interaction is ligand-inducible. Interacts with AKAP13, CUEDC2, HEXIM1, KDM5A, MAP1S, SMARD1, and UBE1C. Interacts with MUC1; the interaction is stimulated by 7 beta-estradiol (E2) and enhances ESR1-mediated transcription. Interacts with DNTTIP2, and UIMC1. Interacts with KMT2D/MLL2. Interacts with ATAD2; the interaction is enhanced by estradiol. Interacts with KIF18A and LDB1. Interacts with RLIM (via its C-terminus). Interacts with MACROD1. Interacts with SH2D4A and PLCG. Interacts with SH2D4A; the interaction blocks binding to PLCG and inhibits estrogen-induced cell proliferation. Interacts with DYNLL1. Interacts with CCDC62; the interaction requires estradiol and appears to enhance the transcription of target genes. Interacts with NR2C1; the interaction prevents homodimerization of ESR1 and suppresses its transcriptional activity and cell growth. Interacts with DNAAF4. Interacts with PRMT2. Interacts with RBFOX2. Interacts with EP300; the interaction is estrogen-dependent and enhanced by CITED1. Interacts with CITED1; the interaction is estrogen-dependent. Interacts with FAM120B, FOXL2, PHB2 and SLC30A9. Interacts with coactivators NCOA3 and NCOA6. Interacts with STK3/MST2 only in the presence of SAV1 and vice-versa. Binds to CSNK1D. Interacts with NCOA2; NCOA2 can interact with ESR1 AF-1 and AF-2 domains simultaneously and mediate their transcriptional synergy. Interacts with DDX5. Interacts with NCOA1; the interaction seems to require a self-association of N-terminal and C-terminal regions. Interacts with ZNF366, DDX17, NFKB1, RELA, SP1 and SP3. Interacts with NRIP1. Interacts with GPER1; the interaction occurs in an estrogen-dependent manner. Interacts with CLOCK and the interaction is stimulated by estrogen. Interacts with TRIP4 (ufmylated); estrogen dependent. Interacts with LMTK3; the interaction phosphorylates ESR1 (in vitro) and protects it against proteasomal degradation. Interacts with CCAR2 (via N-terminus) in a ligand-independent manner. Interacts with ZFHX3. Interacts with SFR1 in a ligand-dependent and -independent manner. Interacts with DCAF13, LATS1 and DCAF1; regulates ESR1 ubiquitination and ubiquitin-mediated proteasomal degradation. Interacts (via DNA-binding domain) with POU4F2 (C-terminus); this interaction increases the estrogen receptor ESR1 transcriptional activity in a DNA- and ligand 17-beta-estradiol-independent manner. Interacts with ESRRB isoform 1. Interacts with UBE3A and WBP2. Interacts with GTF2B. Interacts with RBM39. In the absence of hormonal ligand, interacts with TACC1. Interacts with PI3KR1 or PI3KR2 and PTK2/FAK1. Interacts with SRC. Interacts with BAG1; the interaction is promoted in the absence of estradiol (17-beta-estradiol/E2). Interacts with and ubiquitinated by STUB1; the interaction is promoted in the absence of estradiol (17-beta-estradiol/E2). Interacts with NEDD8. In terms of processing, ubiquitinated; regulated by LATS1 via DCAF1 it leads to ESR1 proteasomal degradation. Deubiquitinated by OTUB1. Ubiquitinated by STUB1/CHIP; in the CA1 hippocampal region following loss of endogenous circulating estradiol (17-beta-estradiol/E2). Ubiquitinated by UBR5, leading to its degradation: UBR5 specifically recognizes and binds ligand-bound ESR1 when it is not associated with coactivators (NCOAs). In presence of NCOAs, the UBR5-degron is not accessible, preventing its ubiquitination and degradation. Post-translationally, phosphorylated by cyclin A/CDK2 and CK1. Phosphorylation probably enhances transcriptional activity. Dephosphorylation at Ser-118 by PPP5C inhibits its transactivation activity. Phosphorylated by LMTK3 (in vitro). Palmitoylated at Cys-447 by ZDHHC7 and ZDHHC21. Palmitoylation is required for plasma membrane targeting and for rapid intracellular signaling via ERK and AKT kinases and cAMP generation, but not for signaling mediated by the nuclear hormone receptor. In terms of processing, dimethylated by PRMT1 at Arg-260. The methylation may favor cytoplasmic localization. Demethylated by JMJD6 at Arg-260.

It localises to the nucleus. Its subcellular location is the cytoplasm. The protein localises to the golgi apparatus. The protein resides in the cell membrane. Functionally, nuclear hormone receptor. The steroid hormones and their receptors are involved in the regulation of eukaryotic gene expression and affect cellular proliferation and differentiation in target tissues. Ligand-dependent nuclear transactivation involves either direct homodimer binding to a palindromic estrogen response element (ERE) sequence or association with other DNA-binding transcription factors, such as AP-1/c-Jun, c-Fos, ATF-2, Sp1 and Sp3, to mediate ERE-independent signaling. Ligand binding induces a conformational change allowing subsequent or combinatorial association with multiprotein coactivator complexes through LXXLL motifs of their respective components. Mutual transrepression occurs between the estrogen receptor (ER) and NF-kappa-B in a cell-type specific manner. Decreases NF-kappa-B DNA-binding activity and inhibits NF-kappa-B-mediated transcription from the IL6 promoter and displace RELA/p65 and associated coregulators from the promoter. Recruited to the NF-kappa-B response element of the CCL2 and IL8 promoters and can displace CREBBP. Present with NF-kappa-B components RELA/p65 and NFKB1/p50 on ERE sequences. Can also act synergistically with NF-kappa-B to activate transcription involving respective recruitment adjacent response elements; the function involves CREBBP. Can activate the transcriptional activity of TFF1. Also mediates membrane-initiated estrogen signaling involving various kinase cascades. Essential for MTA1-mediated transcriptional regulation of BRCA1 and BCAS3. Maintains neuronal survival in response to ischemic reperfusion injury when in the presence of circulating estradiol (17-beta-estradiol/E2). The polypeptide is Estrogen receptor (ESR1) (Mesocricetus auratus (Golden hamster)).